Reading from the N-terminus, the 263-residue chain is Protein STK_14130 (263 aa).

Belongs to the CinA family.

In Sulfurisphaera tokodaii (strain DSM 16993 / JCM 10545 / NBRC 100140 / 7) (Sulfolobus tokodaii), this protein is Protein STK_14130.